A 102-amino-acid chain; its full sequence is Small ribosomal subunit protein uS10 (102 aa).

The protein belongs to the universal ribosomal protein uS10 family. Part of the 30S ribosomal subunit.

Functionally, involved in the binding of tRNA to the ribosomes. In Agrobacterium fabrum (strain C58 / ATCC 33970) (Agrobacterium tumefaciens (strain C58)), this protein is Small ribosomal subunit protein uS10.